Reading from the N-terminus, the 411-residue chain is MINTFTYFEPEYLIDKNLIFLYFDFDAFFASVEELENPELVNQPLIVGNRFSRSVVSTCNYVARSYGIRSGMSILKALELCPNAIFAHSNFRNYRKHSKRIFSVIESTFSLKIDVLSVDEGVACFQNISFKKAFLIAKKIKNFVFQNLRIKISIGISDHFLIAKIFSNQAKPFGIKSCSVKDIKKKLWPLPITEIPGIGEKHIDLVFKNNFYKINDLAVCEDASLLKKVFGNFWESLKAVSLGKWYTDNNNQVKSRSFAVSETLEDLNYSNNQLNKKLTQIFDQLFIRLQLSSQVCKGIVVQLKSNDFIVNSHSNKMKKYSNDYRKLLSITKRLFNRLLINTEKNVRLIGISFFDLKKIDTDEGQKKSLFYQFIPKSISKLSEESSLDKLIFDINESFGFEIIKRANKLKS.

The 180-residue stretch at 20-199 (FLYFDFDAFF…LPITEIPGIG (180 aa)) folds into the UmuC domain.

It belongs to the DNA polymerase type-Y family.

This is an uncharacterized protein from Mycoplasma genitalium (strain ATCC 33530 / DSM 19775 / NCTC 10195 / G37) (Mycoplasmoides genitalium).